Consider the following 361-residue polypeptide: Phospho-N-acetylmuramoyl-pentapeptide-transferase (361 aa).

The next 10 helical transmembrane spans lie at 28-48 (LAII…IKFL), 74-94 (TMGG…LADL), 99-119 (TWIT…DDYA), 133-153 (SKLL…EYLD), 168-188 (LSLD…VGSS), 203-223 (VPIA…GNLI), 236-256 (TGEL…FLWF), 263-283 (VFMG…ISVI), 288-308 (IVLA…ILQV), and 338-358 (KVVI…LSSL).

Belongs to the glycosyltransferase 4 family. MraY subfamily. Requires Mg(2+) as cofactor.

The protein localises to the cell inner membrane. It carries out the reaction UDP-N-acetyl-alpha-D-muramoyl-L-alanyl-gamma-D-glutamyl-meso-2,6-diaminopimeloyl-D-alanyl-D-alanine + di-trans,octa-cis-undecaprenyl phosphate = di-trans,octa-cis-undecaprenyl diphospho-N-acetyl-alpha-D-muramoyl-L-alanyl-D-glutamyl-meso-2,6-diaminopimeloyl-D-alanyl-D-alanine + UMP. It participates in cell wall biogenesis; peptidoglycan biosynthesis. In terms of biological role, catalyzes the initial step of the lipid cycle reactions in the biosynthesis of the cell wall peptidoglycan: transfers peptidoglycan precursor phospho-MurNAc-pentapeptide from UDP-MurNAc-pentapeptide onto the lipid carrier undecaprenyl phosphate, yielding undecaprenyl-pyrophosphoryl-MurNAc-pentapeptide, known as lipid I. In Rickettsia massiliae (strain Mtu5), this protein is Phospho-N-acetylmuramoyl-pentapeptide-transferase.